A 664-amino-acid chain; its full sequence is Protein-arginine deiminase type-3 (664 aa).

The protein belongs to the protein arginine deiminase family. Ca(2+) is required as a cofactor. As to expression, epidermis and hair follicles.

The protein localises to the cytoplasm. It catalyses the reaction L-arginyl-[protein] + H2O = L-citrullyl-[protein] + NH4(+). Functionally, catalyzes the deimination of arginine residues of proteins. This Rattus norvegicus (Rat) protein is Protein-arginine deiminase type-3 (Padi3).